Reading from the N-terminus, the 741-residue chain is Catalase-peroxidase (741 aa).

Positions 86–208 (WHSAGSYRIF…FAATEMGLIY (123 aa)) form a cross-link, tryptophyl-tyrosyl-methioninium (Trp-Tyr) (with M-234). His87 functions as the Proton acceptor in the catalytic mechanism. A cross-link (tryptophyl-tyrosyl-methioninium (Tyr-Met) (with W-86)) is located at residues 208 to 234 (YVNPEGPGGNPDPLGSAQEIRVAFRRM). His249 serves as a coordination point for heme b.

Belongs to the peroxidase family. Peroxidase/catalase subfamily. Homodimer or homotetramer. Requires heme b as cofactor. Post-translationally, formation of the three residue Trp-Tyr-Met cross-link is important for the catalase, but not the peroxidase activity of the enzyme.

It catalyses the reaction H2O2 + AH2 = A + 2 H2O. It carries out the reaction 2 H2O2 = O2 + 2 H2O. Bifunctional enzyme with both catalase and broad-spectrum peroxidase activity. Also displays NADH oxidase, INH lyase and isonicotinoyl-NAD synthase activities. This Archaeoglobus fulgidus (strain ATCC 49558 / DSM 4304 / JCM 9628 / NBRC 100126 / VC-16) protein is Catalase-peroxidase.